The chain runs to 88 residues: DNA-directed RNA polymerase subunit omega (88 aa).

It belongs to the RNA polymerase subunit omega family. The RNAP catalytic core consists of 2 alpha, 1 beta, 1 beta' and 1 omega subunit. When a sigma factor is associated with the core the holoenzyme is formed, which can initiate transcription.

The catalysed reaction is RNA(n) + a ribonucleoside 5'-triphosphate = RNA(n+1) + diphosphate. Its function is as follows. Promotes RNA polymerase assembly. Latches the N- and C-terminal regions of the beta' subunit thereby facilitating its interaction with the beta and alpha subunits. This chain is DNA-directed RNA polymerase subunit omega, found in Salinispora tropica (strain ATCC BAA-916 / DSM 44818 / JCM 13857 / NBRC 105044 / CNB-440).